The following is a 333-amino-acid chain: Holliday junction branch migration complex subunit RuvB (333 aa).

Positions 4–185 (IDRLVSTDVL…FGIVQRLEFY (182 aa)) are large ATPase domain (RuvB-L). Residues Ile24, Arg25, Gly66, Lys69, Thr70, Thr71, 132-134 (EDY), Arg175, Tyr185, and Arg222 contribute to the ATP site. Thr70 lines the Mg(2+) pocket. Positions 186–256 (SVPDLEHIVS…IAIKALEMLN (71 aa)) are small ATPAse domain (RuvB-S). Residues 259 to 333 (KEGLDYMDSK…HAYQHFICGG (75 aa)) are head domain (RuvB-H). The DNA site is built by Arg295, Arg314, and Arg319.

Belongs to the RuvB family. In terms of assembly, homohexamer. Forms an RuvA(8)-RuvB(12)-Holliday junction (HJ) complex. HJ DNA is sandwiched between 2 RuvA tetramers; dsDNA enters through RuvA and exits via RuvB. An RuvB hexamer assembles on each DNA strand where it exits the tetramer. Each RuvB hexamer is contacted by two RuvA subunits (via domain III) on 2 adjacent RuvB subunits; this complex drives branch migration. In the full resolvosome a probable DNA-RuvA(4)-RuvB(12)-RuvC(2) complex forms which resolves the HJ.

The protein localises to the cytoplasm. It catalyses the reaction ATP + H2O = ADP + phosphate + H(+). The RuvA-RuvB-RuvC complex processes Holliday junction (HJ) DNA during genetic recombination and DNA repair, while the RuvA-RuvB complex plays an important role in the rescue of blocked DNA replication forks via replication fork reversal (RFR). RuvA specifically binds to HJ cruciform DNA, conferring on it an open structure. The RuvB hexamer acts as an ATP-dependent pump, pulling dsDNA into and through the RuvAB complex. RuvB forms 2 homohexamers on either side of HJ DNA bound by 1 or 2 RuvA tetramers; 4 subunits per hexamer contact DNA at a time. Coordinated motions by a converter formed by DNA-disengaged RuvB subunits stimulates ATP hydrolysis and nucleotide exchange. Immobilization of the converter enables RuvB to convert the ATP-contained energy into a lever motion, pulling 2 nucleotides of DNA out of the RuvA tetramer per ATP hydrolyzed, thus driving DNA branch migration. The RuvB motors rotate together with the DNA substrate, which together with the progressing nucleotide cycle form the mechanistic basis for DNA recombination by continuous HJ branch migration. Branch migration allows RuvC to scan DNA until it finds its consensus sequence, where it cleaves and resolves cruciform DNA. This is Holliday junction branch migration complex subunit RuvB from Hamiltonella defensa subsp. Acyrthosiphon pisum (strain 5AT).